Consider the following 313-residue polypeptide: Protein FixB (313 aa).

Residue 255–283 (LYLAVGISGQIQHMVGANASQTIFAINKD) coordinates FAD.

The protein belongs to the ETF alpha-subunit/FixB family. As to quaternary structure, heterodimer of FixA and FixB.

It participates in amine and polyamine metabolism; carnitine metabolism. Required for anaerobic carnitine reduction. May bring reductant to CaiA. The sequence is that of Protein FixB from Shigella flexneri.